We begin with the raw amino-acid sequence, 180 residues long: Large ribosomal subunit protein uL6 (180 aa).

The protein belongs to the universal ribosomal protein uL6 family. In terms of assembly, part of the 50S ribosomal subunit.

Its function is as follows. This protein binds to the 23S rRNA, and is important in its secondary structure. It is located near the subunit interface in the base of the L7/L12 stalk, and near the tRNA binding site of the peptidyltransferase center. The protein is Large ribosomal subunit protein uL6 of Bdellovibrio bacteriovorus (strain ATCC 15356 / DSM 50701 / NCIMB 9529 / HD100).